A 555-amino-acid polypeptide reads, in one-letter code: Chaperonin GroEL 2 (555 aa).

ATP contacts are provided by residues 29-32 (TLGP), 86-90 (DGTTT), G414, 480-482 (NAL), and D496.

Belongs to the chaperonin (HSP60) family. Forms a cylinder of 14 subunits composed of two heptameric rings stacked back-to-back. Interacts with the co-chaperonin GroES.

It localises to the cytoplasm. The catalysed reaction is ATP + H2O + a folded polypeptide = ADP + phosphate + an unfolded polypeptide.. Functionally, together with its co-chaperonin GroES, plays an essential role in assisting protein folding. The GroEL-GroES system forms a nano-cage that allows encapsulation of the non-native substrate proteins and provides a physical environment optimized to promote and accelerate protein folding. The chain is Chaperonin GroEL 2 from Synechococcus sp. (strain ATCC 27144 / PCC 6301 / SAUG 1402/1) (Anacystis nidulans).